The sequence spans 634 residues: Acetylcholinesterase (634 aa).

Residues 1 to 23 form the signal peptide; that stretch reads MKTSDILLLPTVLLTFLFHNCFA. A disulfide bridge connects residues Cys-91 and Cys-118. Asn-133 and Asn-184 each carry an N-linked (GlcNAc...) asparagine glycan. The Acyl-ester intermediate role is filled by Ser-225. A disulfide bond links Cys-279 and Cys-290. Asn-283 carries an N-linked (GlcNAc...) asparagine glycan. The Charge relay system role is filled by Glu-352. An N-linked (GlcNAc...) asparagine glycan is attached at Asn-368. Cys-427 and Cys-580 are joined by a disulfide. Catalysis depends on His-495, which acts as the Charge relay system. Asn-512 and Asn-592 each carry an N-linked (GlcNAc...) asparagine glycan.

The protein belongs to the type-B carboxylesterase/lipase family. As to quaternary structure, dimers and collagen-tailed forms, in which catalytic tetramers are associated with anchoring proteins that attach them to the basal lamina or to cell membranes. In the collagen-tailed forms, subunits are associated with a specific collagen, COLQ, which triggers the formation of isoform T tetramers from dimers.

The protein localises to the synapse. The protein resides in the secreted. It is found in the cell membrane. The enzyme catalyses acetylcholine + H2O = choline + acetate + H(+). In terms of biological role, terminates signal transduction at the neuromuscular junction by rapid hydrolysis of the acetylcholine released into the synaptic cleft. The polypeptide is Acetylcholinesterase (ache) (Danio rerio (Zebrafish)).